The sequence spans 514 residues: Voltage-gated potassium channel regulatory subunit KCNG1 (514 aa).

Residues 1 to 224 (MTLLPGDNSH…DMVERPHSGL (224 aa)) are Cytoplasmic-facing. The segment covering 180–196 (MEREEEEEPLDSEDQES) has biased composition (acidic residues). The tract at residues 180-205 (MEREEEEEPLDSEDQESEGPSASEGR) is disordered. Residues 225–246 (PGKVFACLSVLFVTVTAVNLSV) form a helical membrane-spanning segment. At 247–267 (STLPSLREEEEQGQCSQMCHN) the chain is on the extracellular side. A helical membrane pass occupies residues 268–289 (VFIVESVCVGWFSLEFLLRFIQ). Residues 290-300 (APSKFAFLRSP) lie on the Cytoplasmic side of the membrane. A helical membrane pass occupies residues 301-321 (LTLIDLVAILPYYVTLLVDGA). At 322 to 338 (ASSRRKPSTGNSYLDKV) the chain is on the extracellular side. The helical; Voltage-sensor transmembrane segment at 339–359 (GLVLRVLRALRILYVMRLARH) threads the bilayer. The Cytoplasmic segment spans residues 360–374 (SLGLQTLGLTARRCT). Residues 375 to 396 (REFGLLLLFLCVAIALFAPLLY) traverse the membrane as a helical segment. The Extracellular segment spans residues 397–411 (VIENEMADSPEFTSI). An intramembrane region (helical) is located at residues 412-423 (PACYWWAVITMT). The Selectivity filter motif lies at 424 to 429 (TVGYGD). The stretch at 424–431 (TVGYGDMV) is an intramembrane region. Over 432-438 (PRSTPGQ) the chain is Extracellular. The chain crosses the membrane as a helical span at residues 439–467 (VVALSSILSGILLMAFPVTSIFHTFSRSY). The Cytoplasmic portion of the chain corresponds to 468–514 (LELKQEQERVLIRRAQYLIKTKSQLSGMSQDSDILFGSASSDTRDNN).

It belongs to the potassium channel family. G (TC 1.A.1.2) subfamily. Kv6.1/KCNG1 sub-subfamily. As to quaternary structure, heterotetramer with KCNB1 or KCNB2.

It is found in the cell membrane. Regulatory alpha-subunit of the voltage-gated potassium (Kv) channel which, when coassembled with KCNB1 or KCNB2, can modulate their expression and their gating kinetics by acting on deactivation upon repolarization and inactivation during maintained depolarization. Potassium channel subunit that does not form functional channels by itself. This is Voltage-gated potassium channel regulatory subunit KCNG1 from Mus musculus (Mouse).